The chain runs to 382 residues: ATP phosphoribosyltransferase regulatory subunit (382 aa).

The protein belongs to the class-II aminoacyl-tRNA synthetase family. HisZ subfamily. In terms of assembly, heteromultimer composed of HisG and HisZ subunits.

The protein resides in the cytoplasm. It participates in amino-acid biosynthesis; L-histidine biosynthesis; L-histidine from 5-phospho-alpha-D-ribose 1-diphosphate: step 1/9. In terms of biological role, required for the first step of histidine biosynthesis. May allow the feedback regulation of ATP phosphoribosyltransferase activity by histidine. This is ATP phosphoribosyltransferase regulatory subunit from Acidovorax sp. (strain JS42).